The following is a 412-amino-acid chain: Fringe glycosyltransferase (412 aa).

At 1–15 (MMSLTVLSPPQRFKR) the chain is on the cytoplasmic side. The chain crosses the membrane as a helical; Signal-anchor for type II membrane protein span at residues 16-34 (ILQAMMLAVAVVYMTLLLY). The Lumenal segment spans residues 35-412 (QSAYGYPGIQ…FPYFSFCPPR (378 aa)). Substrate is bound at residue arginine 164. Cystine bridges form between cysteine 204–cysteine 215 and cysteine 233–cysteine 297. Aspartate 237 provides a ligand contact to substrate. Residue aspartate 238 participates in Mn(2+) binding. The active site involves aspartate 327. Histidine 351 is a binding site for Mn(2+). A disulfide bridge links cysteine 400 with cysteine 409.

This sequence belongs to the glycosyltransferase 31 family. Mn(2+) serves as cofactor. As to expression, expressed in dorsal cells.

Its subcellular location is the golgi apparatus membrane. The enzyme catalyses 3-O-(alpha-L-fucosyl)-L-threonyl-[EGF-like domain protein] + UDP-N-acetyl-alpha-D-glucosamine = 3-O-(N-acetyl-beta-D-glucosaminyl-(1-&gt;3)-alpha-L-fucosyl)-L-threonyl-[EGF-like domain protein] + UDP + H(+). The catalysed reaction is 3-O-(alpha-L-fucosyl)-L-seryl-[EGF-like domain protein] + UDP-N-acetyl-alpha-D-glucosamine = 3-O-(N-acetyl-beta-D-glucosaminyl-(1-&gt;3)-alpha-L-fucosyl)-L-seryl-[EGF-like domain protein] + UDP + H(+). Functionally, glycosyltransferase involved in the elongation of O-linked ligands to activate Notch signaling. Possesses fucose-specific beta-1,3-N-acetylglucosaminyltransferase activity; extends the O-linked fucose on the Notch EGF repeats. Boundary-specific cell-signaling molecule that is responsible for dorsal-ventral cell interactions during wing development. This is Fringe glycosyltransferase (fng) from Drosophila melanogaster (Fruit fly).